Here is a 230-residue protein sequence, read N- to C-terminus: Probable septum site-determining protein MinC (230 aa).

Belongs to the MinC family. In terms of assembly, interacts with MinD and FtsZ.

Its function is as follows. Cell division inhibitor that blocks the formation of polar Z ring septums. Rapidly oscillates between the poles of the cell to destabilize FtsZ filaments that have formed before they mature into polar Z rings. Prevents FtsZ polymerization. The chain is Probable septum site-determining protein MinC from Cronobacter sakazakii (strain ATCC BAA-894) (Enterobacter sakazakii).